The chain runs to 371 residues: tRNA-specific 2-thiouridylase MnmA 2 (371 aa).

Residues 13–20 (GMSGGVDS) and methionine 39 each bind ATP. The tract at residues 99-101 (NPD) is interaction with target base in tRNA. Cysteine 104 functions as the Nucleophile in the catalytic mechanism. A disulfide bridge links cysteine 104 with cysteine 200. Glycine 128 provides a ligand contact to ATP. An interaction with tRNA region spans residues 150–152 (KDQ). Residue cysteine 200 is the Cysteine persulfide intermediate of the active site. The tract at residues 308–309 (RY) is interaction with tRNA.

It belongs to the MnmA/TRMU family.

It localises to the cytoplasm. It carries out the reaction S-sulfanyl-L-cysteinyl-[protein] + uridine(34) in tRNA + AH2 + ATP = 2-thiouridine(34) in tRNA + L-cysteinyl-[protein] + A + AMP + diphosphate + H(+). In terms of biological role, catalyzes the 2-thiolation of uridine at the wobble position (U34) of tRNA, leading to the formation of s(2)U34. This chain is tRNA-specific 2-thiouridylase MnmA 2, found in Geobacillus kaustophilus (strain HTA426).